The sequence spans 602 residues: Threonine--tRNA ligase (602 aa).

The catalytic stretch occupies residues aspartate 208–proline 499. Zn(2+) contacts are provided by cysteine 300, histidine 351, and histidine 476.

This sequence belongs to the class-II aminoacyl-tRNA synthetase family. As to quaternary structure, homodimer. Requires Zn(2+) as cofactor.

The protein resides in the cytoplasm. The enzyme catalyses tRNA(Thr) + L-threonine + ATP = L-threonyl-tRNA(Thr) + AMP + diphosphate + H(+). In terms of biological role, catalyzes the attachment of threonine to tRNA(Thr) in a two-step reaction: L-threonine is first activated by ATP to form Thr-AMP and then transferred to the acceptor end of tRNA(Thr). Also edits incorrectly charged L-seryl-tRNA(Thr). This Campylobacter jejuni (strain RM1221) protein is Threonine--tRNA ligase.